A 193-amino-acid chain; its full sequence is Cysteine and glycine-rich protein 2 (193 aa).

Positions 10-61 constitute an LIM zinc-binding 1 domain; the sequence is CGACGRTVYHAEEVQCDGRSFHRCCFLCMVCRKNLDSTTVAIHDEEIYCKSC. The Nuclear localization signal motif lies at 64-69; that stretch reads KKYGPK. A Glycyl lysine isopeptide (Lys-Gly) (interchain with G-Cter in SUMO2) cross-link involves residue lysine 91. Residues lysine 112 and lysine 131 each carry the N6-acetyllysine modification. Residues 119-170 enclose the LIM zinc-binding 2 domain; the sequence is CSRCGDSVYAAEKIIGAGKPWHKNCFRCAKCGKSLESTTLTEKEGEIYCKGC. Lysine 137 bears the N6-acetyllysine; alternate mark. N6-succinyllysine; alternate is present on lysine 137. Lysine 161 bears the N6-acetyllysine mark.

As to quaternary structure, interacts with KAT14. The LIM domain 1 is necessary and sufficient for this interaction. Interacts with GLRX3.

It localises to the nucleus. Drastically down-regulated in response to PDGF-BB or cell injury, that promote smooth muscle cell proliferation and dedifferentiation. Seems to play a role in the development of the embryonic vascular system. This chain is Cysteine and glycine-rich protein 2 (CSRP2), found in Bos taurus (Bovine).